A 64-amino-acid polypeptide reads, in one-letter code: MNAKEMRGKEAAELKQELESLLRAHFALRMQVATQQSNKTADLGKLRRDIARVKTIMREKAGQA.

Belongs to the universal ribosomal protein uL29 family.

This chain is Large ribosomal subunit protein uL29, found in Thiobacillus denitrificans (strain ATCC 25259 / T1).